The chain runs to 618 residues: Pyocin-S1 (618 aa).

This sequence belongs to the colicin/pyosin nuclease family. Purified pyocin S1 makes up a complex of the two (large and small) proteins. The large protein, but not the pyocin complex, shows in vitro DNase activity.

Its function is as follows. Causes breakdown of chromosomal DNA as well as complete inhibition of lipid synthesis in sensitive cells. The polypeptide is Pyocin-S1 (pys1) (Pseudomonas aeruginosa).